Here is a 468-residue protein sequence, read N- to C-terminus: 23S rRNA (uracil(1939)-C(5))-methyltransferase RlmD (468 aa).

Residues 12–70 (SKQLSPKLSLNVTQLDHLGAGMAQHQGKVVFIPQALPGERVSVQLTDQKKSFAKAKLIK) form the TRAM domain. Residues Cys83, Cys89, Cys92, and Cys174 each coordinate [4Fe-4S] cluster. Positions 296, 325, 330, 351, 378, and 398 each coordinate S-adenosyl-L-methionine. Residue Cys424 is the Nucleophile of the active site.

Belongs to the class I-like SAM-binding methyltransferase superfamily. RNA M5U methyltransferase family. RlmD subfamily.

The catalysed reaction is uridine(1939) in 23S rRNA + S-adenosyl-L-methionine = 5-methyluridine(1939) in 23S rRNA + S-adenosyl-L-homocysteine + H(+). Its function is as follows. Catalyzes the formation of 5-methyl-uridine at position 1939 (m5U1939) in 23S rRNA. This Shewanella denitrificans (strain OS217 / ATCC BAA-1090 / DSM 15013) protein is 23S rRNA (uracil(1939)-C(5))-methyltransferase RlmD.